Consider the following 138-residue polypeptide: Acidic phospholipase A2 Ts-A1 (138 aa).

The N-terminal stretch at 1 to 16 is a signal peptide; sequence MRTLWIMAVLQVGVEG. 7 disulfide bridges follow: Cys-42-Cys-131, Cys-44-Cys-60, Cys-59-Cys-111, Cys-65-Cys-138, Cys-66-Cys-104, Cys-73-Cys-97, and Cys-91-Cys-102. Ca(2+) is bound by residues Phe-43, Gly-45, and Gly-47. His-63 is an active-site residue. Position 64 (Asp-64) interacts with Ca(2+). Asp-105 is an active-site residue.

It depends on Ca(2+) as a cofactor. Expressed by the venom gland.

It localises to the secreted. It catalyses the reaction a 1,2-diacyl-sn-glycero-3-phosphocholine + H2O = a 1-acyl-sn-glycero-3-phosphocholine + a fatty acid + H(+). Its function is as follows. Snake venom phospholipase A2 (PLA2) that shows a moderate inhibition of ADP-induced human platelet aggregation when tested on platelet rich plasma. Exhibits high hydrolytic activities and prefers the anionic micelles (dPPC with deoxycholate) to the zwitterionic micelles (dPPC with Triton X-100). PLA2 catalyzes the calcium-dependent hydrolysis of the 2-acyl groups in 3-sn-phosphoglycerides. The protein is Acidic phospholipase A2 Ts-A1 of Trimeresurus stejnegeri (Chinese green tree viper).